The following is a 148-amino-acid chain: Ubiquitin-conjugating enzyme E2 13 (148 aa).

The region spanning 2–148 (ALPKRIIKEI…AREWTKKYAV (147 aa)) is the UBC core domain. C86 functions as the Glycyl thioester intermediate in the catalytic mechanism.

This sequence belongs to the ubiquitin-conjugating enzyme family. As to quaternary structure, heterodimer with spm2.

It carries out the reaction S-ubiquitinyl-[E1 ubiquitin-activating enzyme]-L-cysteine + [E2 ubiquitin-conjugating enzyme]-L-cysteine = [E1 ubiquitin-activating enzyme]-L-cysteine + S-ubiquitinyl-[E2 ubiquitin-conjugating enzyme]-L-cysteine.. Its pathway is protein modification; protein ubiquitination. In terms of biological role, has a role in the DNA error-free postreplication repair (PRR) pathway. The ubc13/spm2 heterodimer catalyzes the synthesis of non-canonical poly-ubiquitin chains that are linked through 'Lys-63'. The polypeptide is Ubiquitin-conjugating enzyme E2 13 (ubc13) (Schizosaccharomyces pombe (strain 972 / ATCC 24843) (Fission yeast)).